Reading from the N-terminus, the 204-residue chain is Transcription initiation factor TFIID subunit 11b (204 aa).

The segment at 38-60 (PFEAAMEEQEESPVETEQTLEGD) is disordered. Positions 42 to 58 (AMEEQEESPVETEQTLE) are enriched in acidic residues. The Histone-fold domain maps to 106–195 (FTEEQMSRYE…RRLKLQGKVP (90 aa)).

The protein belongs to the TAF11 family. As to quaternary structure, component of the TFIID complex. TFIID is composed of TATA binding protein (TBP) and a number of TBP-associated factors (TAFs) whose MWs range from 14-217 kDa. In terms of tissue distribution, expressed in roots, leaves and inflorescences.

The protein resides in the nucleus. In terms of biological role, TAFs are components of the transcription factor IID (TFIID) complex that is essential for mediating regulation of RNA polymerase transcription. In Arabidopsis thaliana (Mouse-ear cress), this protein is Transcription initiation factor TFIID subunit 11b (TAF11B).